The sequence spans 215 residues: Large ribosomal subunit protein bL25 (215 aa).

Positions Glu192 to Glu203 are enriched in acidic residues. The disordered stretch occupies residues Glu192–Glu215. Over residues Glu205–Glu215 the composition is skewed to basic and acidic residues.

This sequence belongs to the bacterial ribosomal protein bL25 family. CTC subfamily. Part of the 50S ribosomal subunit; part of the 5S rRNA/L5/L18/L25 subcomplex. Contacts the 5S rRNA. Binds to the 5S rRNA independently of L5 and L18.

Its function is as follows. This is one of the proteins that binds to the 5S RNA in the ribosome where it forms part of the central protuberance. This is Large ribosomal subunit protein bL25 from Thermotoga maritima (strain ATCC 43589 / DSM 3109 / JCM 10099 / NBRC 100826 / MSB8).